The primary structure comprises 79 residues: Succinate dehydrogenase assembly factor 1, mitochondrial (79 aa).

It belongs to the complex I LYR family. SDHAF1 subfamily. Interacts with sdh2 within an sdh1-sdh2 subcomplex.

It localises to the mitochondrion matrix. Plays an essential role in the assembly of succinate dehydrogenase (SDH), an enzyme complex (also referred to as respiratory complex II) that is a component of both the tricarboxylic acid (TCA) cycle and the mitochondrial electron transport chain, and which couples the oxidation of succinate to fumarate with the reduction of ubiquinone (coenzyme Q) to ubiquinol. Promotes maturation of the iron-sulfur protein subunit sdh2 of the SDH catalytic dimer, protecting it from the deleterious effects of oxidants. May act together with SDHAF3. This Schizosaccharomyces pombe (strain 972 / ATCC 24843) (Fission yeast) protein is Succinate dehydrogenase assembly factor 1, mitochondrial.